The chain runs to 89 residues: Putative antitoxin VapB42 (89 aa).

Functionally, possibly the antitoxin component of a type II toxin-antitoxin (TA) system. Its cognate toxin is VapC42 (Potential). The protein is Putative antitoxin VapB42 (vapB42) of Mycobacterium tuberculosis (strain CDC 1551 / Oshkosh).